Here is a 365-residue protein sequence, read N- to C-terminus: tRNA 2-selenouridine synthase (365 aa).

The Rhodanese domain occupies 12-136 (FLDDVPMMDM…LRTFLLDTTQ (125 aa)). The S-selanylcysteine intermediate role is filled by Cys95.

This sequence belongs to the SelU family. Monomer.

The enzyme catalyses 5-methylaminomethyl-2-thiouridine(34) in tRNA + selenophosphate + (2E)-geranyl diphosphate + H2O + H(+) = 5-methylaminomethyl-2-selenouridine(34) in tRNA + (2E)-thiogeraniol + phosphate + diphosphate. The catalysed reaction is 5-methylaminomethyl-2-thiouridine(34) in tRNA + (2E)-geranyl diphosphate = 5-methylaminomethyl-S-(2E)-geranyl-thiouridine(34) in tRNA + diphosphate. It catalyses the reaction 5-methylaminomethyl-S-(2E)-geranyl-thiouridine(34) in tRNA + selenophosphate + H(+) = 5-methylaminomethyl-2-(Se-phospho)selenouridine(34) in tRNA + (2E)-thiogeraniol. It carries out the reaction 5-methylaminomethyl-2-(Se-phospho)selenouridine(34) in tRNA + H2O = 5-methylaminomethyl-2-selenouridine(34) in tRNA + phosphate. Involved in the post-transcriptional modification of the uridine at the wobble position (U34) of tRNA(Lys), tRNA(Glu) and tRNA(Gln). Catalyzes the conversion of 2-thiouridine (S2U-RNA) to 2-selenouridine (Se2U-RNA). Acts in a two-step process involving geranylation of 2-thiouridine (S2U) to S-geranyl-2-thiouridine (geS2U) and subsequent selenation of the latter derivative to 2-selenouridine (Se2U) in the tRNA chain. The polypeptide is tRNA 2-selenouridine synthase (Pseudomonas putida (strain W619)).